A 252-amino-acid chain; its full sequence is 3-dehydroquinate dehydratase (252 aa).

Residues Ser-21, 46 to 48 (EWR), and Arg-82 each bind 3-dehydroquinate. Catalysis depends on His-143, which acts as the Proton donor/acceptor. Lys-170 acts as the Schiff-base intermediate with substrate in catalysis. Residues Arg-213, Ser-232, and Gln-236 each coordinate 3-dehydroquinate.

It belongs to the type-I 3-dehydroquinase family. Homodimer.

It catalyses the reaction 3-dehydroquinate = 3-dehydroshikimate + H2O. It functions in the pathway metabolic intermediate biosynthesis; chorismate biosynthesis; chorismate from D-erythrose 4-phosphate and phosphoenolpyruvate: step 3/7. Functionally, involved in the third step of the chorismate pathway, which leads to the biosynthesis of aromatic amino acids. Catalyzes the cis-dehydration of 3-dehydroquinate (DHQ) and introduces the first double bond of the aromatic ring to yield 3-dehydroshikimate. The protein is 3-dehydroquinate dehydratase of Shigella sonnei (strain Ss046).